The following is a 313-amino-acid chain: Ornithine carbamoyltransferase (313 aa).

Carbamoyl phosphate-binding positions include 57–60 (STRT), Arg-108, and 135–138 (HPTQ). L-ornithine-binding positions include Asn-167, Asp-231, and 235–236 (SM). Residues 272 to 273 (CL) and Arg-300 each bind carbamoyl phosphate.

Belongs to the aspartate/ornithine carbamoyltransferase superfamily. OTCase family.

Its subcellular location is the cytoplasm. It catalyses the reaction carbamoyl phosphate + L-ornithine = L-citrulline + phosphate + H(+). It participates in amino-acid biosynthesis; L-arginine biosynthesis; L-arginine from L-ornithine and carbamoyl phosphate: step 1/3. Reversibly catalyzes the transfer of the carbamoyl group from carbamoyl phosphate (CP) to the N(epsilon) atom of ornithine (ORN) to produce L-citrulline. The sequence is that of Ornithine carbamoyltransferase from Thermotoga maritima (strain ATCC 43589 / DSM 3109 / JCM 10099 / NBRC 100826 / MSB8).